The primary structure comprises 845 residues: Protein TSD2 (845 aa).

Residues 193–283 (DVDSDSESDS…SASATRLTNA (91 aa)) form a disordered region. Basic and acidic residues-rich tracts occupy residues 202 to 212 (SDSHSDSHSDS) and 230 to 242 (ARSH…DGSG). The segment covering 243 to 272 (GKRKRGSHSPLSRRRQRHKQGQRHKPRHRS) has biased composition (basic residues).

The protein belongs to the CDC45 family.

The protein resides in the nucleus. Its function is as follows. Temperature-sensitive protein required for DNA synthesis. May be a transcription factor that regulates the level or influences the stability of DNA polymerases or auxiliary proteins. The chain is Protein TSD2 (TSD2) from Mycosarcoma maydis (Corn smut fungus).